Here is a 140-residue protein sequence, read N- to C-terminus: uncharacterized protein (140 aa).

Helical transmembrane passes span 63 to 83 (LGFV…TLAT) and 119 to 139 (ILLY…IFIN).

The protein resides in the membrane. This is an uncharacterized protein from Schizosaccharomyces pombe (strain 972 / ATCC 24843) (Fission yeast).